A 283-amino-acid chain; its full sequence is Protein-S-isoprenylcysteine O-methyltransferase (283 aa).

Over 1 to 15 the chain is Cytoplasmic; it reads MAAARRGSAGSEARL. The chain crosses the membrane as a helical span at residues 16–32; sequence SLATFLLGASVLALPLL. Residues 33 to 40 are Lumenal-facing; the sequence is TRAGLQGR. A helical membrane pass occupies residues 41-58; that stretch reads TGLALYVAGLNALLLLLY. The Cytoplasmic portion of the chain corresponds to 59–68; sequence RPPRYQIAIR. Residues 69–86 traverse the membrane as a helical segment; sequence ACFLGFVFGCGVLLSFSQ. Residues 87–91 are Lumenal-facing; it reads SSWNH. Residues 92–111 traverse the membrane as a helical segment; that stretch reads FGWYVCSLSLFHYSEYLVTA. Topologically, residues 112 to 130 are cytoplasmic; it reads VNNPKSLSLDSFLLNHSLE. The chain crosses the membrane as a helical span at residues 131-148; that stretch reads YTVAALSSWIEFTLENIF. At 149 to 153 the chain is on the lumenal side; the sequence is WPELK. A helical transmembrane segment spans residues 154–173; sequence QITWLSATGLLMVVFGECLR. Residues 174 to 211 are Cytoplasmic-facing; the sequence is KAAMFTAGSNFNHVVQSEKSDTHTLVTSGVYAWCRHPS. S-adenosyl-L-methionine contacts are provided by residues Gln-189, 196-199, Tyr-204, and 209-212; these read HTLV and HPSY. Residues 212-227 form a helical membrane-spanning segment; sequence YVGWFYWSIGTQVMLC. Position 228 (Asn-228) is a topological domain, lumenal. A helical membrane pass occupies residues 229 to 243; sequence PICGVVYALTVWRFF. Topologically, residues 244-283 are cytoplasmic; the sequence is RDRTEEEEISLIHFFGEEYLDYKKRVPTGLPFIKGVKVEL. Arg-246 contributes to the substrate binding site. Residue Glu-250 participates in S-adenosyl-L-methionine binding.

The protein belongs to the class VI-like SAM-binding methyltransferase superfamily. Isoprenylcysteine carboxyl methyltransferase family. As to expression, highly enriched in adult cerebellum, with a low level expression in other brain regions.

The protein localises to the endoplasmic reticulum membrane. The enzyme catalyses [protein]-C-terminal S-[(2E,6E)-farnesyl]-L-cysteine + S-adenosyl-L-methionine = [protein]-C-terminal S-[(2E,6E)-farnesyl]-L-cysteine methyl ester + S-adenosyl-L-homocysteine. Catalyzes the post-translational methylation of isoprenylated C-terminal cysteine residues. The sequence is that of Protein-S-isoprenylcysteine O-methyltransferase (Icmt) from Mus musculus (Mouse).